The sequence spans 362 residues: Uracil-DNA glycosylase (362 aa).

The tract at residues alanine 28–alanine 97 is disordered. Aspartate 205 (proton acceptor) is an active-site residue.

The protein belongs to the uracil-DNA glycosylase (UDG) superfamily. UNG family.

It is found in the host nucleus. The enzyme catalyses Hydrolyzes single-stranded DNA or mismatched double-stranded DNA and polynucleotides, releasing free uracil.. Its function is as follows. Excises uracil residues from the DNA which can arise as a result of misincorporation of dUMP residues by DNA polymerase or deamination of cytosines. Therefore may reduce deleterious uracil incorporation into the viral genome, particularly in terminally differentiated cells which lack DNA repair enzymes. This chain is Uracil-DNA glycosylase (UL2), found in Psittacid herpesvirus 1 (isolate Amazon parrot/-/97-0001/1997) (PsHV-1).